We begin with the raw amino-acid sequence, 65 residues long: Large ribosomal subunit protein bL35 (65 aa).

This sequence belongs to the bacterial ribosomal protein bL35 family.

The chain is Large ribosomal subunit protein bL35 from Methylobacillus flagellatus (strain ATCC 51484 / DSM 6875 / VKM B-1610 / KT).